The primary structure comprises 115 residues: Nucleoid-associated protein Ccel_0243 (115 aa).

It belongs to the YbaB/EbfC family. In terms of assembly, homodimer.

The protein localises to the cytoplasm. The protein resides in the nucleoid. Binds to DNA and alters its conformation. May be involved in regulation of gene expression, nucleoid organization and DNA protection. The polypeptide is Nucleoid-associated protein Ccel_0243 (Ruminiclostridium cellulolyticum (strain ATCC 35319 / DSM 5812 / JCM 6584 / H10) (Clostridium cellulolyticum)).